The primary structure comprises 630 residues: Plastin-3 (630 aa).

2 EF-hand domains span residues Asp-12–Pro-47 and Lys-52–Ser-87. Asp-25, Asn-27, Asn-29, Glu-36, Asp-65, Asn-67, Asp-69, Lys-71, and Glu-76 together coordinate Ca(2+). 2 actin-binding regions span residues Thr-109–Lys-382 and Pro-383–Met-627. 2 Calponin-homology (CH) domains span residues Glu-123–Leu-239 and Leu-267–Pro-378. A phosphoserine mark is found at Ser-268, Ser-293, Ser-326, and Ser-339. Thr-391 is modified (phosphothreonine). Calponin-homology (CH) domains lie at Thr-397–Thr-506 and Lys-518–Met-627.

As to quaternary structure, monomer. In terms of tissue distribution, expressed in a variety of organs, including muscle, brain, uterus and esophagus.

It localises to the cytoplasm. Its function is as follows. Actin-bundling protein. This Homo sapiens (Human) protein is Plastin-3 (PLS3).